The sequence spans 117 residues: Galanin peptides (117 aa).

The N-terminal stretch at 1–19 (MQRCAGFLFLSLILCAALS) is a signal peptide. The propeptide occupies 20 to 30 (ETFGLVLSAKE). Threonine 61 is modified (threonine amide).

Belongs to the galanin family.

The protein resides in the secreted. In terms of biological role, endocrine hormone of the central and peripheral nervous systems that binds and activates the G protein-coupled receptors GALR1, GALR2, and GALR3. This small neuropeptide may regulate diverse physiologic functions including contraction of smooth muscle of the gastrointestinal and genitourinary tract, growth hormone and insulin release and adrenal secretion. In Coturnix japonica (Japanese quail), this protein is Galanin peptides (GAL).